The sequence spans 148 residues: uncharacterized protein (148 aa).

Residues 36–45 (PGAPSAGPMS) show a composition bias toward low complexity. Residues 36–148 (PGAPSAGPMS…SGTAFFPGTT (113 aa)) form a disordered region. Positions 46–55 (DSNSKGSTPR) are enriched in polar residues.

This is an uncharacterized protein from Bovine leukemia virus (isolate Japanese BLV-1) (BLV).